The primary structure comprises 211 residues: Redox-sensing transcriptional repressor Rex (211 aa).

Residues 17–56 (LYYRFIQNFAQEGMERISSKELSEAMKIDSATIRRDFSYF) constitute a DNA-binding region (H-T-H motif). An NAD(+)-binding site is contributed by 91-96 (GVGNLG).

It belongs to the transcriptional regulatory Rex family. As to quaternary structure, homodimer.

The protein localises to the cytoplasm. Functionally, modulates transcription in response to changes in cellular NADH/NAD(+) redox state. This Lysinibacillus sphaericus (strain C3-41) protein is Redox-sensing transcriptional repressor Rex.